Consider the following 402-residue polypeptide: Nicotinate phosphoribosyltransferase (402 aa).

Position 221 is a phosphohistidine; by autocatalysis (histidine 221).

This sequence belongs to the NAPRTase family. Transiently phosphorylated on a His residue during the reaction cycle. Phosphorylation strongly increases the affinity for substrates and increases the rate of nicotinate D-ribonucleotide production. Dephosphorylation regenerates the low-affinity form of the enzyme, leading to product release.

The catalysed reaction is nicotinate + 5-phospho-alpha-D-ribose 1-diphosphate + ATP + H2O = nicotinate beta-D-ribonucleotide + ADP + phosphate + diphosphate. It functions in the pathway cofactor biosynthesis; NAD(+) biosynthesis; nicotinate D-ribonucleotide from nicotinate: step 1/1. Its function is as follows. Catalyzes the synthesis of beta-nicotinate D-ribonucleotide from nicotinate and 5-phospho-D-ribose 1-phosphate at the expense of ATP. The sequence is that of Nicotinate phosphoribosyltransferase from Sodalis glossinidius (strain morsitans).